A 184-amino-acid polypeptide reads, in one-letter code: Photosystem I assembly protein Ycf4 (184 aa).

The next 2 helical transmembrane spans lie at 22-42 (FCWA…GIPS) and 64-84 (IVMC…WCTI).

Belongs to the Ycf4 family.

It localises to the plastid. The protein resides in the chloroplast thylakoid membrane. In terms of biological role, seems to be required for the assembly of the photosystem I complex. This Huperzia lucidula (Shining clubmoss) protein is Photosystem I assembly protein Ycf4.